Consider the following 790-residue polypeptide: MAAQALAAQAVASRLQRQEEDIRWLCAEVQRLRDEQLRGPERGQAEGPRLTREVAQLQAENRDLHQRLCGLRLRLAEQRRTEAGRAAAHEPPTQNQEKDTKKKRLKQSEPGREVKQPNFIKERLQLFETLKTDHQLLPATQEKKNTNNVISVRVAGGKTVQGERWKTTPYQVAAGISKELAEHTVIAKVNGVLWDLDRPLEGDSTVELLMFDNEEAQAVYWHSSAHILGEAMELYYGGHLCYGPPIENGFYYDMFIEDRVVSSTELSALENICKTIIKEKQPFERLEVSKDTLLEMFKYNKFKCRILKEKVDTPTTTVYRCGPLIDLCKGPHVRHTGKIKAIKIFKNSSTYWEGNPEMETLQRIYGISFPDSKMMKDWEKFQEEAKSRDHRKIGKEQELFFFHDLSPGSCFFLPRGAFIYNALMDFIREEYHKRNFTEVLSPNMYNSKLWETSGHWQHYSNNMFTFDVEKDTFALKPMNCPGHCLMFAHRPRSWREMPVRFADFGVLHRNELSGTLSGLTRVRRFQQDDAHIFCMVEQIEEEIKGCLHFLQSVYSTFGFSFQLNLSTRPEHFLGEIEIWDEAERQLQNSLVEFGKPWKINPGDGAFYGPKIDIKIKDAIGRYHQCATIQLDFQLPIRFNLTYVSKDGDDKNRPVIIHRAILGSVERMIAILSENYGGKWPLWLSPRQVMVIPVGPACENYALQVSKECFEEGFMADVDLDDSCTLNKKIRNAQLAQYNFILVVGEKEKINNAVNVRTRDNKIHGEISIASVIEKLKNLKKSRTLNAEEDF.

Ala-2 bears the N-acetylalanine mark. The stretch at 13 to 68 forms a coiled coil; it reads SRLQRQEEDIRWLCAEVQRLRDEQLRGPERGQAEGPRLTREVAQLQAENRDLHQRL. Residues 80–117 are disordered; it reads RTEAGRAAAHEPPTQNQEKDTKKKRLKQSEPGREVKQP. A compositionally biased stretch (basic and acidic residues) spans 96–117; it reads QEKDTKKKRLKQSEPGREVKQP. Residues 148–210 enclose the TGS domain; the sequence is NVISVRVAGG…EGDSTVELLM (63 aa). Position 441 is a phosphoserine (Ser-441). The Nuclear localization signal signature appears at 774–780; that stretch reads KLKNLKK.

Belongs to the class-II aminoacyl-tRNA synthetase family. May be a component of the multisynthetase complex (MSC), a large multi-subunit complex which contains at least eight different aminoacyl-tRNA synthetases plus three auxillary subunits AIMP1, AIMP2 and EEF1E1. Interacts with the MSC components EPRS1, AIMP1, AIMP2 and KARS1. As to expression, ubiquitous (at protein level). Strongly expressed in muscle (at protein level). Moderately expressed in heart and liver (at protein level). Weakly expressed in stomach, kidney, testis, spleen, brain, fat and lung (at protein level).

Its subcellular location is the cytoplasm. The protein localises to the nucleus. It carries out the reaction tRNA(Thr) + L-threonine + ATP = L-threonyl-tRNA(Thr) + AMP + diphosphate + H(+). Its function is as follows. Catalyzes the attachment of threonine to tRNA(Thr) in a two-step reaction: threonine is first activated by ATP to form Thr-AMP and then transferred to the acceptor end of tRNA(Thr). Also edits incorrectly charged tRNA(Thr) via its editing domain, at the post-transfer stage. The protein is Threonine--tRNA ligase 2, cytoplasmic (Tars3) of Mus musculus (Mouse).